The sequence spans 307 residues: Alginate lyase (307 aa).

Residues 1 to 20 form the signal peptide; the sequence is MLKSGVMVASLCLFSVPSRA.

The protein belongs to the polysaccharide lyase 7 family.

The protein resides in the secreted. The catalysed reaction is Eliminative cleavage of alginate to give oligosaccharides with 4-deoxy-alpha-L-erythro-hex-4-enuronosyl groups at their non-reducing ends and beta-D-mannuronate at their reducing end.. Functionally, degrades alginates that contain guluronic acid. The protein is Alginate lyase (alyA) of Klebsiella pneumoniae.